The chain runs to 449 residues: Exodeoxyribonuclease 7 large subunit (449 aa).

Belongs to the XseA family. Heterooligomer composed of large and small subunits.

It is found in the cytoplasm. The catalysed reaction is Exonucleolytic cleavage in either 5'- to 3'- or 3'- to 5'-direction to yield nucleoside 5'-phosphates.. In terms of biological role, bidirectionally degrades single-stranded DNA into large acid-insoluble oligonucleotides, which are then degraded further into small acid-soluble oligonucleotides. This chain is Exodeoxyribonuclease 7 large subunit, found in Salmonella heidelberg (strain SL476).